A 356-amino-acid chain; its full sequence is Altered inheritance of mitochondria protein 23, mitochondrial (356 aa).

The N-terminal 32 residues, 1-32 (MLKVPLSDVLSQKMLFLKSFRYFHCTKYFSRD), are a transit peptide targeting the mitochondrion.

The protein belongs to the AIM23 family.

It is found in the mitochondrion. This Saccharomyces cerevisiae (strain ATCC 204508 / S288c) (Baker's yeast) protein is Altered inheritance of mitochondria protein 23, mitochondrial (AIM23).